The chain runs to 186 residues: Large ribosomal subunit protein bL12c (186 aa).

Residues 1 to 11 (MASTLSTITLR) show a composition bias toward polar residues. Disordered stretches follow at residues 1-23 (MASTLSTITLRSPSPSTASSTHA) and 162-186 (EGVSKDEAEDAKKQLEEAGAKVSIA). A chloroplast-targeting transit peptide spans 1-53 (MASTLSTITLRSPSPSTASSTHASIPFPKKALEFPIRTPKLHHRRATFLRPLA). A compositionally biased stretch (low complexity) spans 12 to 23 (SPSPSTASSTHA). A compositionally biased stretch (basic and acidic residues) spans 162–180 (EGVSKDEAEDAKKQLEEAG).

This sequence belongs to the bacterial ribosomal protein bL12 family.

It is found in the plastid. The protein localises to the chloroplast. In Nicotiana tabacum (Common tobacco), this protein is Large ribosomal subunit protein bL12c (RPL12).